A 285-amino-acid polypeptide reads, in one-letter code: Alginate lyase (285 aa).

The N-terminal stretch at 1-20 is a signal peptide; that stretch reads MIKSNLVISSLAIVSSMSYA.

The protein belongs to the polysaccharide lyase 6 family.

It catalyses the reaction Eliminative cleavage of alginate to give oligosaccharides with 4-deoxy-alpha-L-erythro-hex-4-enuronosyl groups at their non-reducing ends and beta-D-mannuronate at their reducing end.. The sequence is that of Alginate lyase (alxM) from Photobacterium sp. (strain ATCC 43367).